The sequence spans 125 residues: Conopressin-conophysin, isoform 1 (125 aa).

A signal peptide spans 1 to 22 (MQMGRPTLLPCLLLLLVLSTQA). An intrachain disulfide couples Cys23 to Cys28. Gly31 carries the glycine amide modification. Residues 32 to 39 (GKRDVHMI) constitute a propeptide that is removed on maturation. Intrachain disulfides connect Cys45–Cys85, Cys48–Cys59, Cys53–Cys75, Cys60–Cys65, Cys92–Cys112, Cys104–Cys124, and Cys113–Cys118.

The protein belongs to the vasopressin/oxytocin family. As to expression, expressed by the venom gland.

The protein localises to the secreted. Its function is as follows. Targets vasopressin-oxytocin related receptors. The chain is Conopressin-conophysin, isoform 1 from Conus monile (Necklace cone).